Consider the following 105-residue polypeptide: Large ribosomal subunit protein uL24 (105 aa).

Belongs to the universal ribosomal protein uL24 family. As to quaternary structure, part of the 50S ribosomal subunit.

One of two assembly initiator proteins, it binds directly to the 5'-end of the 23S rRNA, where it nucleates assembly of the 50S subunit. Its function is as follows. One of the proteins that surrounds the polypeptide exit tunnel on the outside of the subunit. This chain is Large ribosomal subunit protein uL24, found in Vibrio atlanticus (strain LGP32) (Vibrio splendidus (strain Mel32)).